The following is a 232-amino-acid chain: 7-cyano-7-deazaguanine synthase (232 aa).

8 to 18 (FSGGQDSTTCL) is an ATP binding site. Residues C188, C197, C200, and C203 each coordinate Zn(2+).

It belongs to the QueC family. It depends on Zn(2+) as a cofactor.

The catalysed reaction is 7-carboxy-7-deazaguanine + NH4(+) + ATP = 7-cyano-7-deazaguanine + ADP + phosphate + H2O + H(+). It participates in purine metabolism; 7-cyano-7-deazaguanine biosynthesis. Catalyzes the ATP-dependent conversion of 7-carboxy-7-deazaguanine (CDG) to 7-cyano-7-deazaguanine (preQ(0)). In Buchnera aphidicola subsp. Schizaphis graminum (strain Sg), this protein is 7-cyano-7-deazaguanine synthase.